We begin with the raw amino-acid sequence, 395 residues long: D-alanine--D-alanine ligase (395 aa).

Positions 172 to 391 (KVVLDAAGIP…YTELITRLIE (220 aa)) constitute an ATP-grasp domain. 204–266 (DAGLTYPLFV…EQGIDGREIE (63 aa)) is a binding site for ATP. Residues aspartate 345, glutamate 358, and asparagine 360 each coordinate Mg(2+).

This sequence belongs to the D-alanine--D-alanine ligase family. Mg(2+) is required as a cofactor. The cofactor is Mn(2+).

It localises to the cytoplasm. The catalysed reaction is 2 D-alanine + ATP = D-alanyl-D-alanine + ADP + phosphate + H(+). It participates in cell wall biogenesis; peptidoglycan biosynthesis. Cell wall formation. In Bifidobacterium longum (strain DJO10A), this protein is D-alanine--D-alanine ligase.